Reading from the N-terminus, the 586-residue chain is Cryptochrome-1 (586 aa).

In terms of domain architecture, Photolyase/cryptochrome alpha/beta spans 3–132 (VNAVHWFRKG…EVIVRISHTL (130 aa)). A Glycyl lysine isopeptide (Lys-Gly) (interchain with G-Cter in ubiquitin) cross-link involves residue K11. The LIR 1 signature appears at 50–54 (NRWRF). S71 is modified (phosphoserine; by AMPK). The LIR 2 signature appears at 82-87 (DVFPRL). K107 participates in a covalent cross-link: Glycyl lysine isopeptide (Lys-Gly) (interchain with G-Cter in ubiquitin). Positions 151-156 (KRFQTL) match the LIR 3 motif. Residue K159 forms a Glycyl lysine isopeptide (Lys-Gly) (interchain with G-Cter in ubiquitin) linkage. S247 bears the Phosphoserine; by MAPK mark. Residue S252 coordinates FAD. 2 consecutive short sequence motifs (LIR) follow at residues 255 to 260 (LRFGCL) and 271 to 276 (DLYKKV). Phosphoserine; by AMPK is present on S280. Positions 285–290 (SLYGQL) match the LIR 6 motif. Q289 contributes to the FAD binding site. A Glycyl lysine isopeptide (Lys-Gly) (interchain with G-Cter in ubiquitin) cross-link involves residue K329. An LIR 7 motif is present at residues 335 to 339 (TGFPW). Position 355 (H355) interacts with FAD. A required for inhibition of CLOCK-BMAL1-mediated transcription region spans residues 371–470 (WISWEEGMKV…LIGINYPKPM (100 aa)). The LIR 8 motif lies at 379-384 (KVFEEL). 387–389 (DAD) is an FAD binding site. 3 consecutive short sequence motifs (LIR) follow at residues 395 to 400 (GSWMWL), 411 to 416 (HCYCPV), and 430 to 435 (RRYLPV). Residues 471–493 (VNHAEASRLNIERMKQIYQQLSR) are interaction with TIMELESS. A Glycyl lysine isopeptide (Lys-Gly) (interchain with G-Cter in ubiquitin) cross-link involves residue K485. 2 short sequence motifs (LIR) span residues 486-491 (QIYQQL) and 492-497 (SRYRGL). Residues 545–559 (QQTHLLKQGRSSMGT) are compositionally biased toward polar residues. Residues 545-586 (QQTHLLKQGRSSMGTGLSGGKRPSQEEDTQSIGPKVQRQSTN) are disordered. K565 is covalently cross-linked (Glycyl lysine isopeptide (Lys-Gly) (interchain with G-Cter in ubiquitin)). Residue S568 is modified to Phosphoserine.

This sequence belongs to the DNA photolyase class-1 family. In terms of assembly, component of the circadian core oscillator, which includes the CRY proteins, CLOCK or NPAS2, BMAL1 or BMAL2, CSNK1D and/or CSNK1E, TIMELESS, and the PER proteins. Interacts directly with TIMELESS. Interacts directly with PER1, PER2 and PER3; interaction with PER2 inhibits its ubiquitination and vice versa. Interacts with FBXL21. Interacts with FBXL3. Interacts with CLOCK-BMAL1 independently of PER2 and DNA. Interacts with HDAC1, HDAC2 and SIN3B. Interacts with nuclear receptors AR, NR1D1, NR3C1/GR, RORA and RORC; the interaction with at least NR3C1/GR is ligand dependent. Interacts with PRKDC. Interacts with the G protein subunit alpha GNAS; the interaction may block GPCR-mediated regulation of cAMP concentrations. Interacts with PRMT5. Interacts with EZH2. Interacts with MYBBP1A, DOCK7, HNRNPU, RPL7A, RPL8 and RPS3. Interacts with PPP5C (via TPR repeats). Interacts with MAP1LC3B. Interacts with CLOCK. Interacts with BMAL1. Interacts weakly with HDAC3; this interaction is enhanced in the presence of FBXL3. Interacts with TRIM28, KCTD5 and DDB1. Interacts with FOXO1. Interacts with DTL and DDB1-CUL4A complex. Interacts with HNF4A. Interacts with PSMD2 in a KDM8-dependent manner. Interacts with KDM8 in a FBXL3-dependent manner. Interacts with PPARG in a ligand-dependent manner. Interacts with PPARD (via domain NR LBD) and NR1I2 (via domain NR LBD) in a ligand-dependent manner. Interacts with PPARA, NR1I3 and VDR. The cofactor is FAD. Requires (6R)-5,10-methylene-5,6,7,8-tetrahydrofolate as cofactor. Post-translationally, phosphorylation on Ser-247 by MAPK is important for the inhibition of CLOCK-BMAL1-mediated transcriptional activity. Phosphorylation by CSNK1E requires interaction with PER1 or PER2. Phosphorylation at Ser-71 and Ser-280 by AMPK decreases protein stability. Phosphorylation at Ser-568 exhibits a robust circadian rhythm with a peak at CT8, increases protein stability, prevents SCF(FBXL3)-mediated degradation and is antagonized by interaction with PRKDC. Ubiquitinated by the SCF(FBXL3) and SCF(FBXL21) complexes, regulating the balance between degradation and stabilization. The SCF(FBXL3) complex is mainly nuclear and mediates ubiquitination and subsequent degradation of CRY1. In contrast, cytoplasmic SCF(FBXL21) complex-mediated ubiquitination leads to stabilize CRY1 and counteract the activity of the SCF(FBXL3) complex. The SCF(FBXL3) and SCF(FBXL21) complexes probably mediate ubiquitination at different Lys residues. Ubiquitination at Lys-11 and Lys-107 are specifically ubiquitinated by the SCF(FBXL21) complex but not by the SCF(FBXL3) complex. Ubiquitination may be inhibited by PER2. Deubiquitinated by USP7. In terms of processing, undergoes autophagy-mediated degradation in the liver in a time-dependent manner. Autophagic degradation of CRY1 (an inhibitor of gluconeogenesis) occurs during periods of reduced feeding allowing induction of gluconeogenesis and maintenance of blood glucose levels.

Its subcellular location is the cytoplasm. It localises to the nucleus. Transcriptional repressor which forms a core component of the circadian clock. The circadian clock, an internal time-keeping system, regulates various physiological processes through the generation of approximately 24 hour circadian rhythms in gene expression, which are translated into rhythms in metabolism and behavior. It is derived from the Latin roots 'circa' (about) and 'diem' (day) and acts as an important regulator of a wide array of physiological functions including metabolism, sleep, body temperature, blood pressure, endocrine, immune, cardiovascular, and renal function. Consists of two major components: the central clock, residing in the suprachiasmatic nucleus (SCN) of the brain, and the peripheral clocks that are present in nearly every tissue and organ system. Both the central and peripheral clocks can be reset by environmental cues, also known as Zeitgebers (German for 'timegivers'). The predominant Zeitgeber for the central clock is light, which is sensed by retina and signals directly to the SCN. The central clock entrains the peripheral clocks through neuronal and hormonal signals, body temperature and feeding-related cues, aligning all clocks with the external light/dark cycle. Circadian rhythms allow an organism to achieve temporal homeostasis with its environment at the molecular level by regulating gene expression to create a peak of protein expression once every 24 hours to control when a particular physiological process is most active with respect to the solar day. Transcription and translation of core clock components (CLOCK, NPAS2, BMAL1, BMAL2, PER1, PER2, PER3, CRY1 and CRY2) plays a critical role in rhythm generation, whereas delays imposed by post-translational modifications (PTMs) are important for determining the period (tau) of the rhythms (tau refers to the period of a rhythm and is the length, in time, of one complete cycle). A diurnal rhythm is synchronized with the day/night cycle, while the ultradian and infradian rhythms have a period shorter and longer than 24 hours, respectively. Disruptions in the circadian rhythms contribute to the pathology of cardiovascular diseases, cancer, metabolic syndromes and aging. A transcription/translation feedback loop (TTFL) forms the core of the molecular circadian clock mechanism. Transcription factors, CLOCK or NPAS2 and BMAL1 or BMAL2, form the positive limb of the feedback loop, act in the form of a heterodimer and activate the transcription of core clock genes and clock-controlled genes (involved in key metabolic processes), harboring E-box elements (5'-CACGTG-3') within their promoters. The core clock genes: PER1/2/3 and CRY1/2 which are transcriptional repressors form the negative limb of the feedback loop and interact with the CLOCK|NPAS2-BMAL1|BMAL2 heterodimer inhibiting its activity and thereby negatively regulating their own expression. This heterodimer also activates nuclear receptors NR1D1/2 and RORA/B/G, which form a second feedback loop and which activate and repress BMAL1 transcription, respectively. CRY1 and CRY2 have redundant functions but also differential and selective contributions at least in defining the pace of the SCN circadian clock and its circadian transcriptional outputs. More potent transcriptional repressor in cerebellum and liver than CRY2, though more effective in lengthening the period of the SCN oscillator. On its side, CRY2 seems to play a critical role in tuning SCN circadian period by opposing the action of CRY1. With CRY2, is dispensable for circadian rhythm generation but necessary for the development of intercellular networks for rhythm synchrony. Capable of translocating circadian clock core proteins such as PER proteins to the nucleus. Interacts with CLOCK-BMAL1 independently of PER proteins and is found at CLOCK-BMAL1-bound sites, suggesting that CRY may act as a molecular gatekeeper to maintainCLOCK-BMAL1 in a poised and repressed state until the proper time for transcriptional activation. Represses the CLOCK-BMAL1 induced transcription of BHLHE40/DEC1, ATF4, MTA1, KLF10 and NAMPT. May repress circadian target genes expression in collaboration with HDAC1 and HDAC2 through histone deacetylation. Mediates the clock-control activation of ATR and modulates ATR-mediated DNA damage checkpoint. In liver, mediates circadian regulation of cAMP signaling and gluconeogenesis by binding to membrane-coupled G proteins and blocking glucagon-mediated increases in intracellular cAMP concentrations and CREB1 phosphorylation. Inhibits hepatic gluconeogenesis by decreasing nuclear FOXO1 levels that down-regulates gluconeogenic gene expression. Besides its role in the maintenance of the circadian clock, is also involved in the regulation of other processes. Represses glucocorticoid receptor NR3C1/GR-induced transcriptional activity by binding to glucocorticoid response elements (GREs). Plays a key role in glucose and lipid metabolism modulation, in part, through the transcriptional regulation of genes involved in these pathways, such as LEP or ACSL4. Represses PPARD and its target genes in the skeletal muscle and limits exercise capacity. Plays an essential role in the generation of circadian rhythms in the retina. Represses the transcriptional activity of NR1I2. The chain is Cryptochrome-1 (CRY1) from Macaca fascicularis (Crab-eating macaque).